A 359-amino-acid chain; its full sequence is Acyl-CoA desaturase (359 aa).

The Cytoplasmic segment spans residues 1–72; that stretch reads MPAHLLQEEI…EGPKPKLEYV (72 aa). A helical transmembrane segment spans residues 73 to 93; that stretch reads WRNIILMGLLHLGALYGITLI. Asn-75 lines the substrate pocket. Residues 94 to 97 lie on the Lumenal side of the membrane; sequence PTCK. A helical transmembrane segment spans residues 98–118; that stretch reads IYTFLWVLFYYVISALGITAG. Residues 119–217 are Cytoplasmic-facing; it reads VHRLWSHRTY…EKLVMFQRRY (99 aa). Fe cation contacts are provided by His-120 and His-125. The Histidine box-1 signature appears at 120-125; the sequence is HRLWSH. Asn-148, Arg-155, and Asp-156 together coordinate substrate. The Fe cation site is built by His-157, His-160, and His-161. Residues 157–161 carry the Histidine box-2 motif; sequence HRAHH. Positions 188 and 189 each coordinate substrate. Phosphoserine is present on Ser-203. The helical transmembrane segment at 218–237 threads the bilayer; that stretch reads YKPGVLLLCFILPTLVPWYL. The Lumenal segment spans residues 238-241; that stretch reads WGES. A helical transmembrane segment spans residues 242 to 263; that stretch reads FQNSLFFATFLRYAVVLNATWL. Trp-262 contributes to the substrate binding site. Residues 264–359 lie on the Cytoplasmic side of the membrane; it reads VNSAAHMYGY…RTGEESYKSG (96 aa). Residues His-269, His-298, His-301, and His-302 each contribute to the Fe cation site. The Histidine box-3 motif lies at 298–302; it reads HNYHH.

It belongs to the fatty acid desaturase type 1 family. Fe(2+) serves as cofactor.

The protein resides in the endoplasmic reticulum membrane. The catalysed reaction is octadecanoyl-CoA + 2 Fe(II)-[cytochrome b5] + O2 + 2 H(+) = (9Z)-octadecenoyl-CoA + 2 Fe(III)-[cytochrome b5] + 2 H2O. Stearoyl-CoA desaturase that utilizes O(2) and electrons from reduced cytochrome b5 to introduce the first double bond into saturated fatty acyl-CoA substrates. Catalyzes the insertion of a cis double bond at the delta-9 position into fatty acyl-CoA substrates including palmitoyl-CoA and stearoyl-CoA. Gives rise to a mixture of 16:1 and 18:1 unsaturated fatty acids. Plays an important role in lipid biosynthesis. Plays an important role in regulating the expression of genes that are involved in lipogenesis and in regulating mitochondrial fatty acid oxidation. Plays an important role in body energy homeostasis. Contributes to the biosynthesis of membrane phospholipids, cholesterol esters and triglycerides. The chain is Acyl-CoA desaturase (SCD) from Ovis aries (Sheep).